The chain runs to 450 residues: Chromosomal replication initiator protein DnaA (450 aa).

The tract at residues 1-79 (MKDSYFDLNT…MEYAYDVAHD (79 aa)) is domain I, interacts with DnaA modulators. Positions 79–112 (DFFKPELKVIKVVANPVNNQKSNQSNSDFVATDY) are domain II. Residues 113–329 (QLNQNFTFDT…GAFNTLTLMA (217 aa)) are domain III, AAA+ region. G157, G159, K160, and T161 together coordinate ATP. The domain IV, binds dsDNA stretch occupies residues 330–450 (RAGRPINVSN…NLSTKIKEKS (121 aa)).

Belongs to the DnaA family. As to quaternary structure, oligomerizes as a right-handed, spiral filament on DNA at oriC.

It localises to the cytoplasm. In terms of biological role, plays an essential role in the initiation and regulation of chromosomal replication. ATP-DnaA binds to the origin of replication (oriC) to initiate formation of the DNA replication initiation complex once per cell cycle. Binds the DnaA box (a 9 base pair repeat at the origin) and separates the double-stranded (ds)DNA. Forms a right-handed helical filament on oriC DNA; dsDNA binds to the exterior of the filament while single-stranded (ss)DNA is stabiized in the filament's interior. The ATP-DnaA-oriC complex binds and stabilizes one strand of the AT-rich DNA unwinding element (DUE), permitting loading of DNA polymerase. After initiation quickly degrades to an ADP-DnaA complex that is not apt for DNA replication. Binds acidic phospholipids. This chain is Chromosomal replication initiator protein DnaA, found in Oenococcus oeni (strain ATCC BAA-331 / PSU-1).